The primary structure comprises 414 residues: Histidine--tRNA ligase (414 aa).

Belongs to the class-II aminoacyl-tRNA synthetase family. As to quaternary structure, homodimer.

The protein localises to the cytoplasm. It catalyses the reaction tRNA(His) + L-histidine + ATP = L-histidyl-tRNA(His) + AMP + diphosphate + H(+). The chain is Histidine--tRNA ligase from Mycoplasma capricolum subsp. capricolum (strain California kid / ATCC 27343 / NCTC 10154).